A 948-amino-acid polypeptide reads, in one-letter code: Translation initiation factor IF-2 (948 aa).

3 disordered regions span residues 61–120 (IQAN…PALI), 162–243 (KSRE…TQSA), and 255–285 (QEKD…SHKI). A compositionally biased stretch (basic and acidic residues) spans 68–78 (KNPEQDNKDDL). Over residues 173–189 (SNTNNANSTNNANNVNN) the composition is skewed to low complexity. The span at 190-207 (AKKEISEVKKQEQEIKRH) shows a compositional bias: basic and acidic residues. Residues 208–219 (ENIKRRTGFRVI) show a composition bias toward basic residues. The segment covering 230–243 (ENSVAESKKPTQSA) has biased composition (polar residues). Residues 447–616 (ERPPVVTIMG…LIQADIMELK (170 aa)) enclose the tr-type G domain. A G1 region spans residues 456 to 463 (GHVDHGKT). 456 to 463 (GHVDHGKT) contacts GTP. The G2 stretch occupies residues 481-485 (GITQH). The segment at 502–505 (DTPG) is G3. Residues 502–506 (DTPGH) and 556–559 (NKMD) each bind GTP. Residues 556-559 (NKMD) are G4. The segment at 592–594 (SAK) is G5.

The protein belongs to the TRAFAC class translation factor GTPase superfamily. Classic translation factor GTPase family. IF-2 subfamily.

It is found in the cytoplasm. Its function is as follows. One of the essential components for the initiation of protein synthesis. Protects formylmethionyl-tRNA from spontaneous hydrolysis and promotes its binding to the 30S ribosomal subunits. Also involved in the hydrolysis of GTP during the formation of the 70S ribosomal complex. This chain is Translation initiation factor IF-2, found in Helicobacter pylori (strain Shi470).